We begin with the raw amino-acid sequence, 355 residues long: Peptide chain release factor 1 (355 aa).

The residue at position 233 (glutamine 233) is an N5-methylglutamine.

It belongs to the prokaryotic/mitochondrial release factor family. In terms of processing, methylated by PrmC. Methylation increases the termination efficiency of RF1.

It localises to the cytoplasm. Peptide chain release factor 1 directs the termination of translation in response to the peptide chain termination codons UAG and UAA. The chain is Peptide chain release factor 1 from Caldicellulosiruptor bescii (strain ATCC BAA-1888 / DSM 6725 / KCTC 15123 / Z-1320) (Anaerocellum thermophilum).